The sequence spans 233 residues: Membrane steroid-binding protein 2 (233 aa).

Residues 23 to 43 (AFFTVLALAFAVYQVVSGFFV) form a helical membrane-spanning segment. The region spanning 70-167 (EITEEELKLY…SKYVKVGTIQ (98 aa)) is the Cytochrome b5 heme-binding domain. A steroid-binding region spans residues 70–167 (EITEEELKLY…SKYVKVGTIQ (98 aa)). Composition is skewed to basic and acidic residues over residues 169–181 (KDGE…EPSE) and 202–224 (THDE…KDVA). The disordered stretch occupies residues 169–233 (KDGEGKESSE…ATDDDDAAKE (65 aa)). Thr225 bears the Phosphothreonine mark.

The protein belongs to the cytochrome b5 family. MAPR subfamily.

It is found in the cell membrane. This chain is Membrane steroid-binding protein 2 (MSBP2), found in Arabidopsis thaliana (Mouse-ear cress).